A 494-amino-acid polypeptide reads, in one-letter code: BTB/POZ domain and ankyrin repeat-containing protein NH5.1 (494 aa).

Positions 25–130 (SDVAFSVEGR…LYSGQASVAA (106 aa)) constitute a BTB domain. A disordered region spans residues 60–94 (NHQPPPPPPPLNWPMAGGGGGGSGGGGRGGAGGGG). A compositionally biased stretch (pro residues) spans 61–71 (HQPPPPPPPLN). Gly residues predominate over residues 75–94 (AGGGGGGSGGGGRGGAGGGG). A C2HC NPR-type zinc finger spans residues 136–150 (LPGCGARGCWHTRCG). Zn(2+) contacts are provided by Cys139, Cys144, His146, and Cys149. ANK repeat units follow at residues 274 to 302 (NKIR…GLDL), 303 to 333 (DDAL…DVNS), 338 to 367 (TGKT…DPNS), and 371 to 405 (DGVT…KLRL). Disordered stretches follow at residues 421-443 (DGAP…PRSD) and 469-494 (AAGE…NGFA).

This sequence belongs to the plant 'ANKYRIN-BTB/POZ' family. 'NOOT-BOP-COCH-like' (NBCL) subfamily. In terms of assembly, homodimer. Interacts with TGAL5, TGAL7, TGAL8 and TGAL9.

It localises to the nucleus. It is found in the cytoplasm. It functions in the pathway protein modification; protein ubiquitination. Its function is as follows. May act as a substrate-specific adapter of an E3 ubiquitin-protein ligase complex (CUL3-RBX1-BTB) which mediates the ubiquitination and subsequent proteasomal degradation of target proteins. Transcriptional co-regulator involved in the promotion of leaf and floral meristem fate and determinacy. Required for the abscission of senescent organs, probably by regulating the cell wall disorganization in abscission zones (AZs, e.g. pulvini at the base of leaves). In Oryza sativa subsp. japonica (Rice), this protein is BTB/POZ domain and ankyrin repeat-containing protein NH5.1.